Here is a 94-residue protein sequence, read N- to C-terminus: Cytochrome c-551 (94 aa).

A signal peptide spans 1–14; it reads MAFTAMTVAPSALA. Residues cysteine 24, cysteine 27, histidine 28, and methionine 73 each contribute to the heme c site.

In terms of processing, binds 1 heme c group covalently per subunit.

Its function is as follows. Efficiently couple electron transfer between the cytochrome bc1 complex and the photosynthetic reaction center. The protein is Cytochrome c-551 of Allochromatium vinosum (strain ATCC 17899 / DSM 180 / NBRC 103801 / NCIMB 10441 / D) (Chromatium vinosum).